Reading from the N-terminus, the 456-residue chain is UDP-N-acetylmuramate--L-alanine ligase (456 aa).

Position 112 to 118 (112 to 118 (GTHGKTT)) interacts with ATP.

It belongs to the MurCDEF family.

Its subcellular location is the cytoplasm. It carries out the reaction UDP-N-acetyl-alpha-D-muramate + L-alanine + ATP = UDP-N-acetyl-alpha-D-muramoyl-L-alanine + ADP + phosphate + H(+). The protein operates within cell wall biogenesis; peptidoglycan biosynthesis. Functionally, cell wall formation. The polypeptide is UDP-N-acetylmuramate--L-alanine ligase (Trichlorobacter lovleyi (strain ATCC BAA-1151 / DSM 17278 / SZ) (Geobacter lovleyi)).